The primary structure comprises 149 residues: Lipoprotein signal peptidase (149 aa).

Transmembrane regions (helical) follow at residues 53 to 73 and 89 to 109; these read MPGK…ALVI and GLIA…GFVI. Catalysis depends on residues Asp110 and Asp124. The helical transmembrane segment at 119 to 139 threads the bilayer; the sequence is VFNLADSAIVCGGILLLILVL.

The protein belongs to the peptidase A8 family.

The protein localises to the cell membrane. It carries out the reaction Release of signal peptides from bacterial membrane prolipoproteins. Hydrolyzes -Xaa-Yaa-Zaa-|-(S,diacylglyceryl)Cys-, in which Xaa is hydrophobic (preferably Leu), and Yaa (Ala or Ser) and Zaa (Gly or Ala) have small, neutral side chains.. Its pathway is protein modification; lipoprotein biosynthesis (signal peptide cleavage). In terms of biological role, this protein specifically catalyzes the removal of signal peptides from prolipoproteins. The polypeptide is Lipoprotein signal peptidase (Syntrophomonas wolfei subsp. wolfei (strain DSM 2245B / Goettingen)).